The primary structure comprises 299 residues: Protein tantalus (299 aa).

The disordered stretch occupies residues 16 to 100 (KDNRSPTTNS…RSSTFGARAG (85 aa)). Polar residues predominate over residues 20-35 (SPTTNSNLSWQLNQMA). A compositionally biased stretch (acidic residues) spans 53 to 69 (ESDDNVSSESHDSDDVD). The span at 84–93 (CISGSSRRSS) shows a compositional bias: low complexity. 2 positions are modified to phosphoserine: serine 204 and serine 264.

As to quaternary structure, binds to DNA in vitro. Interacts directly with Asx. As to expression, ubiquitously expressed in precellularized embryos. Then it decreases at cellular blastoderm to increase again during germ band extension. During germ band extension, it is highly expressed in somatic and visceral mesoderm. Ubiquitously expressed in imaginal disks. In ovary, it is expressed from stage 10.

Its subcellular location is the nucleus. The protein localises to the cytoplasm. The protein resides in the chromosome. Potential cofactor involved in sensory organ development. Despite its interaction with the Polycomb group protein Asx, it does not regulate the expression of homeotic genes. The polypeptide is Protein tantalus (Drosophila melanogaster (Fruit fly)).